A 214-amino-acid chain; its full sequence is tRNA (guanine-N(7)-)-methyltransferase (214 aa).

The S-adenosyl-L-methionine site is built by glutamate 43, glutamate 68, aspartate 95, and aspartate 117. The active site involves aspartate 117. Substrate is bound by residues lysine 121, aspartate 153, and 190 to 193 (TEYE).

The protein belongs to the class I-like SAM-binding methyltransferase superfamily. TrmB family.

It catalyses the reaction guanosine(46) in tRNA + S-adenosyl-L-methionine = N(7)-methylguanosine(46) in tRNA + S-adenosyl-L-homocysteine. It participates in tRNA modification; N(7)-methylguanine-tRNA biosynthesis. In terms of biological role, catalyzes the formation of N(7)-methylguanine at position 46 (m7G46) in tRNA. This chain is tRNA (guanine-N(7)-)-methyltransferase, found in Staphylococcus aureus (strain MSSA476).